We begin with the raw amino-acid sequence, 547 residues long: Probable bifunctional tRNA threonylcarbamoyladenosine biosynthesis protein (547 aa).

A kae1 region spans residues 1–329; that stretch reads MKNTFILGIE…FRTDDVNVTW (329 aa). Positions 113, 117, and 134 each coordinate Fe cation. Residues 134–138, aspartate 166, glycine 179, glutamate 183, and asparagine 262 contribute to the L-threonylcarbamoyladenylate site; that span reads YVSGA. Aspartate 290 provides a ligand contact to Fe cation. In terms of domain architecture, Protein kinase spans 340-547; that stretch reads EISPEAFLRA…EEIKKRARYA (208 aa). ATP contacts are provided by residues 355-363 and lysine 377; that span reads LDNGAEAVI. Aspartate 464 (proton acceptor; for kinase activity) is an active-site residue.

The protein in the N-terminal section; belongs to the KAE1 / TsaD family. It in the C-terminal section; belongs to the protein kinase superfamily. Tyr protein kinase family. BUD32 subfamily. Component of the KEOPS complex that consists of Kae1, Bud32, Cgi121 and Pcc1; the whole complex dimerizes. Fe(2+) is required as a cofactor.

Its subcellular location is the cytoplasm. The enzyme catalyses L-seryl-[protein] + ATP = O-phospho-L-seryl-[protein] + ADP + H(+). It carries out the reaction L-threonyl-[protein] + ATP = O-phospho-L-threonyl-[protein] + ADP + H(+). The catalysed reaction is L-threonylcarbamoyladenylate + adenosine(37) in tRNA = N(6)-L-threonylcarbamoyladenosine(37) in tRNA + AMP + H(+). In terms of biological role, required for the formation of a threonylcarbamoyl group on adenosine at position 37 (t(6)A37) in tRNAs that read codons beginning with adenine. Is a component of the KEOPS complex that is probably involved in the transfer of the threonylcarbamoyl moiety of threonylcarbamoyl-AMP (TC-AMP) to the N6 group of A37. The Kae1 domain likely plays a direct catalytic role in this reaction. The Bud32 domain probably displays kinase activity that regulates Kae1 function. The polypeptide is Probable bifunctional tRNA threonylcarbamoyladenosine biosynthesis protein (Methanosarcina acetivorans (strain ATCC 35395 / DSM 2834 / JCM 12185 / C2A)).